A 1003-amino-acid polypeptide reads, in one-letter code: Pumilio homolog 4 (1003 aa).

Positions 38-65 are disordered; that stretch reads QHRNQQSFGRERERDIDVHRSGSAPPTV. Over residues 46 to 57 the composition is skewed to basic and acidic residues; that stretch reads GRERERDIDVHR. S225 is modified (phosphoserine). The span at 285-300 shows a compositional bias: polar residues; that stretch reads KNSPNTMLGSTMSSPV. A disordered region spans residues 285-328; that stretch reads KNSPNTMLGSTMSSPVPRNRTPDSHLVGRSTASGLPPIGTRVGP. T305 carries the phosphothreonine modification. In terms of domain architecture, PUM-HD spans 644–984; it reads AEASLLEGFK…HIVARVEKLI (341 aa). Pumilio repeat units follow at residues 664 to 699, 700 to 735, 736 to 771, 772 to 807, 808 to 843, 845 to 880, 881 to 916, and 917 to 958; these read EIVG…AIFP, EILP…ELAE, QVTG…RMVK, ELDG…FIIS, SFYG…RIIM, EIMD…EIIN, KLAG…VLVN, and EMLG…LILS.

It is found in the cytoplasm. Functionally, sequence-specific RNA-binding protein that regulates translation and mRNA stability by binding the 3'-UTR of target mRNAs. Binds the APUM-binding elements (APBEs) in the 3'-UTR mRNA sequence of CLV1, PNH, WUS and FAS2. The sequence is that of Pumilio homolog 4 (APUM4) from Arabidopsis thaliana (Mouse-ear cress).